The chain runs to 160 residues: S-ribosylhomocysteine lyase (160 aa).

The Fe cation site is built by H57, H61, and C127.

Belongs to the LuxS family. In terms of assembly, homodimer. Fe cation serves as cofactor.

It carries out the reaction S-(5-deoxy-D-ribos-5-yl)-L-homocysteine = (S)-4,5-dihydroxypentane-2,3-dione + L-homocysteine. Its function is as follows. Involved in the synthesis of autoinducer 2 (AI-2) which is secreted by bacteria and is used to communicate both the cell density and the metabolic potential of the environment. The regulation of gene expression in response to changes in cell density is called quorum sensing. Catalyzes the transformation of S-ribosylhomocysteine (RHC) to homocysteine (HC) and 4,5-dihydroxy-2,3-pentadione (DPD). The protein is S-ribosylhomocysteine lyase of Streptococcus pneumoniae (strain CGSP14).